The primary structure comprises 164 residues: Protein-export protein SecB (164 aa).

Belongs to the SecB family. Homotetramer, a dimer of dimers. One homotetramer interacts with 1 SecA dimer.

Its subcellular location is the cytoplasm. Its function is as follows. One of the proteins required for the normal export of preproteins out of the cell cytoplasm. It is a molecular chaperone that binds to a subset of precursor proteins, maintaining them in a translocation-competent state. It also specifically binds to its receptor SecA. This Rhodopseudomonas palustris (strain BisB18) protein is Protein-export protein SecB.